We begin with the raw amino-acid sequence, 396 residues long: S-arrestin (396 aa).

A compositionally biased stretch (basic and acidic residues) spans Ala-375–Glu-386. The segment at Ala-375 to Lys-396 is disordered. The span at Glu-387–Lys-396 shows a compositional bias: acidic residues.

Belongs to the arrestin family. Interacts with RHO (via the phosphorylated C-terminus).

It localises to the cell projection. It is found in the cilium. The protein localises to the photoreceptor outer segment. The protein resides in the membrane. Functionally, binds to photoactivated, phosphorylated RHO and terminates RHO signaling via G-proteins by competing with G-proteins for the same binding site on RHO. May play a role in preventing light-dependent degeneration of retinal photoreceptor cells. The protein is S-arrestin (sag) of Xenopus laevis (African clawed frog).